The sequence spans 261 residues: Calcium-binding protein 8 (261 aa).

The interval 1–41 (MRLPEQPGDGKPENETKGDQETPERGEEPRRSPAPDFPTWE) is disordered. The Cytoplasmic portion of the chain corresponds to 1-234 (MRLPEQPGDG…QNRQTCVRKS (234 aa)). Residues 8–33 (GDGKPENETKGDQETPERGEEPRRSP) show a composition bias toward basic and acidic residues. EF-hand domains follow at residues 78-113 (EELD…LGYM) and 114-149 (PSEV…KLVS). Ca(2+)-binding residues include Asp-91, Asp-93, Asn-95, Glu-102, Asp-127, Asp-129, Asp-131, Gln-133, and Glu-138. The helical; Anchor for type IV membrane protein transmembrane segment at 235–255 (LICAFAMAFIISVMLIAANQI) threads the bilayer. Topologically, residues 256–261 (LRSGME) are extracellular.

Interacts with PI4KB. This binding competes with FREQ/NCS1 binding in a calcium-dependent manner. As to expression, brain-specific. High expression in the cerebellum, hippocampus, and cortex.

The protein resides in the golgi apparatus. It localises to the trans-Golgi network membrane. The protein localises to the cytoplasm. Its subcellular location is the perinuclear region. It is found in the cell membrane. Negatively regulates Golgi-to-plasma membrane trafficking by interacting with PI4KB and inhibiting its activity. May play a role in the physiology of neurons and is potentially important in memory and learning. The polypeptide is Calcium-binding protein 8 (Caln1) (Mus musculus (Mouse)).